A 520-amino-acid chain; its full sequence is MAQISSMAQGIQTLSLNSSNLSKTQKGPLVSNSLFFGSKKLTQISAKSLGVFKKDSVLRVVRKSSFRISASVATAEKPHEIVLXPIKDISGTVKLPGSKSLSNRILLLAALSEGRTVVDNLLSSDDIHYMLGALKTLGLHVEDDNENQRAIVEGCGGQFPVGKKSEEEIQLFLGNAGTAMRPLTAAVTVAGGHSRYVLDGVPRMRERPIGDLVDGLKQLGAEVDCSLGTNCPPVRIVSKGGLPGGKVKLSGSISSQYLTALLMAAPLALGDVEIEIIDKLISVPYVEMTLKLMERFGVFVEHSSGWDRFLVKGGQKYKSPGKAFVEGDASSASYFLAGAAVTGGTVTVEGCGTSSLQGDVKFAEVLEKMGAEVTWTENSVTVKGPPRNSSGMKHLRAIDVNMNKMPDVAMTLAVVALFADGPTTIRDVASWRVKETERMIAICTELRKLGATVVEGSDYCIITPPEKLNVTEIDTYDDHRMAMAFSLAACADVPVTIKNPGCTRKTFPDYFEVLQKYSKH.

Residues 1–76 (MAQISSMAQG…RISASVATAE (76 aa)) constitute a chloroplast transit peptide. Positions 99, 100, and 104 each coordinate 3-phosphoshikimate. K99 serves as a coordination point for phosphoenolpyruvate. Residues G177 and R207 each coordinate phosphoenolpyruvate. The 3-phosphoshikimate site is built by S254, S255, Q256, S282, D407, and K434. Q256 contributes to the phosphoenolpyruvate binding site. The active-site Proton acceptor is D407. The phosphoenolpyruvate site is built by R438, R480, and K505.

It belongs to the EPSP synthase family.

It is found in the plastid. The protein localises to the chloroplast. The catalysed reaction is 3-phosphoshikimate + phosphoenolpyruvate = 5-O-(1-carboxyvinyl)-3-phosphoshikimate + phosphate. It functions in the pathway metabolic intermediate biosynthesis; chorismate biosynthesis; chorismate from D-erythrose 4-phosphate and phosphoenolpyruvate: step 6/7. Its function is as follows. Catalyzes the transfer of the enolpyruvyl moiety of phosphoenolpyruvate (PEP) to the 5-hydroxyl of shikimate-3-phosphate (S3P) to produce enolpyruvyl shikimate-3-phosphate and inorganic phosphate. This Solanum lycopersicum (Tomato) protein is 3-phosphoshikimate 1-carboxyvinyltransferase, chloroplastic.